The chain runs to 313 residues: MSQEFAHLSVLLEETVGGLNIKDDGIYIDGTFGRGGHSRQVLQRLGEKGRLIAIDRDPQAIEAAKQFADDPRFQIVHGGFGQLADYVEDLGLVGKIDGVLLDLGVSSPQLDDAERGFSFLRDGPLDMRMDNSQGETAAQWLARAEIEDMAWVFKTYGEEKNARHIARCIAADRDKTPFLRTKDLADLIARITKNKERNKHPATRVFQAIRIYINSELDQIDQALEGALTVLAPQGRLSIISFHSLEDRIVKRFIRRHSQGESVPHGLPITEDQINKSRKLRAIGKAIMPSDEEIERNARARSSVLRIAERLDY.

Residues 35–37 (GGH), D55, F80, D102, and Q109 contribute to the S-adenosyl-L-methionine site.

Belongs to the methyltransferase superfamily. RsmH family.

Its subcellular location is the cytoplasm. The enzyme catalyses cytidine(1402) in 16S rRNA + S-adenosyl-L-methionine = N(4)-methylcytidine(1402) in 16S rRNA + S-adenosyl-L-homocysteine + H(+). Its function is as follows. Specifically methylates the N4 position of cytidine in position 1402 (C1402) of 16S rRNA. This chain is Ribosomal RNA small subunit methyltransferase H, found in Shewanella oneidensis (strain ATCC 700550 / JCM 31522 / CIP 106686 / LMG 19005 / NCIMB 14063 / MR-1).